The following is a 733-amino-acid chain: Catalase-peroxidase (733 aa).

Positions 96 to 219 form a cross-link, tryptophyl-tyrosyl-methioninium (Trp-Tyr) (with M-245); it reads WHSAGTYRTG…LAAVQMGLIY (124 aa). The active-site Proton acceptor is histidine 97. A cross-link (tryptophyl-tyrosyl-methioninium (Tyr-Met) (with W-96)) is located at residues 219 to 245; it reads YVNPEGPNGNPDPLAAAKDIRETFARM. Position 260 (histidine 260) interacts with heme b.

This sequence belongs to the peroxidase family. Peroxidase/catalase subfamily. In terms of assembly, homodimer or homotetramer. The cofactor is heme b. In terms of processing, formation of the three residue Trp-Tyr-Met cross-link is important for the catalase, but not the peroxidase activity of the enzyme.

The enzyme catalyses H2O2 + AH2 = A + 2 H2O. It carries out the reaction 2 H2O2 = O2 + 2 H2O. Its function is as follows. Bifunctional enzyme with both catalase and broad-spectrum peroxidase activity. This Geobacter sp. (strain M21) protein is Catalase-peroxidase.